The chain runs to 313 residues: DNA-directed RNA polymerase subunit alpha (313 aa).

The alpha N-terminal domain (alpha-NTD) stretch occupies residues 1–229; it reads MNSSNLLMEC…NLFKSIGEQK (229 aa). An alpha C-terminal domain (alpha-CTD) region spans residues 243 to 313; the sequence is IKPIDPYTHI…LKNKLGIVLK (71 aa).

The protein belongs to the RNA polymerase alpha chain family. In terms of assembly, in plastids the minimal PEP RNA polymerase catalytic core is composed of four subunits: alpha, beta, beta', and beta''. When a (nuclear-encoded) sigma factor is associated with the core the holoenzyme is formed, which can initiate transcription.

The protein resides in the plastid. The protein localises to the chloroplast. The catalysed reaction is RNA(n) + a ribonucleoside 5'-triphosphate = RNA(n+1) + diphosphate. DNA-dependent RNA polymerase catalyzes the transcription of DNA into RNA using the four ribonucleoside triphosphates as substrates. This chain is DNA-directed RNA polymerase subunit alpha, found in Thalassiosira pseudonana (Marine diatom).